Here is a 195-residue protein sequence, read N- to C-terminus: Capsid protein (195 aa).

A disordered region spans residues 148–195 (NAPILSTLPETTVVRRRGRSPRRRTPSPRRRRSQSPRRRRSASPASQC). The span at 161-188 (VRRRGRSPRRRTPSPRRRRSQSPRRRRS) shows a compositional bias: basic residues. A phosphoserine; by host mark is found at Ser167, Ser174, and Ser182. Residues 167–172 (SPRRRT) form a 1; half-length repeat. Residues 167–188 (SPRRRTPSPRRRRSQSPRRRRS) form a 3 X 7 AA repeats of S-P-R-R-R-[PR]-S region. The Bipartite nuclear localization signal signature appears at 170–187 (RRTPSPRRRRSQSPRRRR). 2 tandem repeats follow at residues 174–180 (SPRRRRS) and 182–188 (SPRRRRS). Residues 189 to 195 (ASPASQC) are RNA binding.

Belongs to the orthohepadnavirus core antigen family. As to quaternary structure, homodimerizes, then multimerizes. Interacts with cytosol exposed regions of viral L glycoprotein present in the reticulum-to-Golgi compartment. Interacts with human FLNB. Phosphorylated form interacts with host importin alpha; this interaction depends on the exposure of the NLS, which itself depends upon genome maturation and/or phosphorylation of the capsid protein. Interacts with host NUP153. In terms of processing, phosphorylated by host SRPK1, SRPK2, and maybe protein kinase C or GAPDH. Phosphorylation is critical for pregenomic RNA packaging. Protein kinase C phosphorylation is stimulated by HBx protein and may play a role in transport of the viral genome to the nucleus at the late step during the viral replication cycle.

The protein resides in the virion. It is found in the host cytoplasm. Functionally, self assembles to form an icosahedral capsid. Most capsids appear to be large particles with an icosahedral symmetry of T=4 and consist of 240 copies of capsid protein, though a fraction forms smaller T=3 particles consisting of 180 capsid proteins. Entering capsids are transported along microtubules to the nucleus. Phosphorylation of the capsid is thought to induce exposure of nuclear localization signal in the C-terminal portion of the capsid protein that allows binding to the nuclear pore complex via the importin (karyopherin-) alpha and beta. Capsids are imported in intact form through the nuclear pore into the nuclear basket, where it probably binds NUP153. Only capsids that contain the mature viral genome can release the viral DNA and capsid protein into the nucleoplasm. Immature capsids get stuck in the basket. Capsids encapsulate the pre-genomic RNA and the P protein. Pre-genomic RNA is reverse-transcribed into DNA while the capsid is still in the cytoplasm. The capsid can then either be directed to the nucleus, providing more genomes for transcription, or bud through the endoplasmic reticulum to provide new virions. The polypeptide is Capsid protein (Hepatitis B virus genotype G (isolate United States/USG17/2002) (HBV-G)).